Reading from the N-terminus, the 380-residue chain is Cytochrome b (380 aa).

4 consecutive transmembrane segments (helical) span residues 34-54 (FGSL…LLAM), 78-99 (WLIR…YLHI), 114-134 (WNTG…GYVL), and 179-199 (FFAL…IHLT). Heme b is bound by residues His-84 and His-98. Heme b contacts are provided by His-183 and His-197. His-202 is an a ubiquinone binding site. The next 4 membrane-spanning stretches (helical) occupy residues 227–247 (LKDI…ALFS), 289–309 (LGGV…PFLH), 321–341 (LSQL…WVGS), and 348–368 (FIII…ILFP).

This sequence belongs to the cytochrome b family. The cytochrome bc1 complex contains 11 subunits: 3 respiratory subunits (MT-CYB, CYC1 and UQCRFS1), 2 core proteins (UQCRC1 and UQCRC2) and 6 low-molecular weight proteins (UQCRH/QCR6, UQCRB/QCR7, UQCRQ/QCR8, UQCR10/QCR9, UQCR11/QCR10 and a cleavage product of UQCRFS1). This cytochrome bc1 complex then forms a dimer. The cofactor is heme b.

The protein resides in the mitochondrion inner membrane. In terms of biological role, component of the ubiquinol-cytochrome c reductase complex (complex III or cytochrome b-c1 complex) that is part of the mitochondrial respiratory chain. The b-c1 complex mediates electron transfer from ubiquinol to cytochrome c. Contributes to the generation of a proton gradient across the mitochondrial membrane that is then used for ATP synthesis. The protein is Cytochrome b (MT-CYB) of Ardenna tenuirostris (Short-tailed shearwater).